Reading from the N-terminus, the 248-residue chain is Triosephosphate isomerase (248 aa).

Residue 9-11 (NWK) participates in substrate binding. The active-site Electrophile is the H101. The active-site Proton acceptor is the E170. Substrate contacts are provided by residues G176, S208, and 229–230 (GG).

The protein belongs to the triosephosphate isomerase family. As to quaternary structure, homodimer.

The protein localises to the cytoplasm. It carries out the reaction D-glyceraldehyde 3-phosphate = dihydroxyacetone phosphate. The protein operates within carbohydrate biosynthesis; gluconeogenesis. Its pathway is carbohydrate degradation; glycolysis; D-glyceraldehyde 3-phosphate from glycerone phosphate: step 1/1. Its function is as follows. Involved in the gluconeogenesis. Catalyzes stereospecifically the conversion of dihydroxyacetone phosphate (DHAP) to D-glyceraldehyde-3-phosphate (G3P). This is Triosephosphate isomerase from Mycoplasmopsis pulmonis (strain UAB CTIP) (Mycoplasma pulmonis).